The primary structure comprises 392 residues: Phosphoglycerate kinase (392 aa).

Residues 21 to 23 (DFN), arginine 36, 59 to 62 (HLGR), arginine 117, and arginine 150 contribute to the substrate site. ATP-binding positions include lysine 200, glycine 288, glutamate 319, and 345–348 (GGDS).

The protein belongs to the phosphoglycerate kinase family. As to quaternary structure, monomer.

It is found in the cytoplasm. It catalyses the reaction (2R)-3-phosphoglycerate + ATP = (2R)-3-phospho-glyceroyl phosphate + ADP. The protein operates within carbohydrate degradation; glycolysis; pyruvate from D-glyceraldehyde 3-phosphate: step 2/5. The protein is Phosphoglycerate kinase of Rubrobacter xylanophilus (strain DSM 9941 / JCM 11954 / NBRC 16129 / PRD-1).